The chain runs to 324 residues: Adducin-related protein C1289.14 (324 aa).

Belongs to the aldolase class II family. Adducin subfamily.

The polypeptide is Adducin-related protein C1289.14 (Schizosaccharomyces pombe (strain 972 / ATCC 24843) (Fission yeast)).